We begin with the raw amino-acid sequence, 316 residues long: GTPase Era (316 aa).

Residues 9–190 enclose the Era-type G domain; it reads RAGFAAIIGA…TAKLVSMMPE (182 aa). Residues 17–24 are G1; that stretch reads GAPNAGKS. 17–24 is a binding site for GTP; sequence GAPNAGKS. Residues 43 to 47 form a G2 region; the sequence is QTTRF. Residues 64 to 67 form a G3 region; that stretch reads DTPG. GTP contacts are provided by residues 64–68 and 140–143; these read DTPGI and NKID. Residues 140-143 form a G4 region; sequence NKID. The G5 stretch occupies residues 169–171; that stretch reads ISA. Residues 221–298 form the KH type-2 domain; that stretch reads VHEELPYAAT…HLFLHVKVKE (78 aa).

Belongs to the TRAFAC class TrmE-Era-EngA-EngB-Septin-like GTPase superfamily. Era GTPase family. As to quaternary structure, monomer.

It is found in the cytoplasm. Its subcellular location is the cell inner membrane. An essential GTPase that binds both GDP and GTP, with rapid nucleotide exchange. Plays a role in 16S rRNA processing and 30S ribosomal subunit biogenesis and possibly also in cell cycle regulation and energy metabolism. This chain is GTPase Era, found in Caulobacter vibrioides (strain ATCC 19089 / CIP 103742 / CB 15) (Caulobacter crescentus).